The chain runs to 616 residues: MQAALIGLNFPLQRRFLSGVLTTTSSAKRCYSGDTGKPYDCTSAEHKKELEECYNRLDLSFENTKEAFKSKSNTELVRALVVLRLCGIQTLVNQNQIILNTMRRVLGKNLFKKTLKNTFFGHFVAGETEEEVRHVVEKLRNYGVKSILDYSVEADITSQEATDKTVKGTSVATVKPAAMTPVVDAKTLETTRERYTVHEEFGDRRQGVSSARTYFYEGEEQCDKNRDIFKDSINAVASATKNEGFVAVKITALGRPQLLLKLSEAIVQTQNFFKALTGGMSLQEGRLTSQEFYKRLGELGVKTDTESVKKFFDEVDFDSDGIVDLHGWNHILDDHVKLGQLFQVLNIKTGSLEPLIQNLSNEEEQEFRNMVRRTLDVAEYAIEKGVRIMVDAEQTYLQPAISKITIEMMKKYNKGRGNIFNTYQAYLKGTLQNMEADMQVARREGWHFGAKLVRGAYMEQERARAKAIGYEDPINDNFEATSKMYESCLTRIADEVHRRGKTNVSVMVASHNEDTVRFALNLMKEKCISPSERVMCMAQLYGMCDQVSFSLGQAGFSVYKYLPYGPVEEVLPYLSRRALENGSVLKKANKERDLLWKELKRRISSGEFKARSSSSS.

This sequence belongs to the proline oxidase family. The cofactor is FAD.

Its subcellular location is the mitochondrion matrix. It carries out the reaction L-proline + a quinone = (S)-1-pyrroline-5-carboxylate + a quinol + H(+). Its pathway is amino-acid degradation; L-proline degradation into L-glutamate; L-glutamate from L-proline: step 1/2. In terms of biological role, converts proline to delta-1-pyrroline-5-carboxylate. Through proline catabolism, promotes reactive oxygen species (ROS) production and the transcription of skn-1 target genes in response to bacterial infection by P.aeruginosa. The protein is Proline dehydrogenase 1, mitochondrial of Caenorhabditis elegans.